The sequence spans 203 residues: Ribosomal RNA large subunit methyltransferase E (203 aa).

S-adenosyl-L-methionine contacts are provided by Gly-51, Trp-53, Asp-69, Asp-85, and Asp-108. Lys-148 (proton acceptor) is an active-site residue.

It belongs to the class I-like SAM-binding methyltransferase superfamily. RNA methyltransferase RlmE family.

It localises to the cytoplasm. The catalysed reaction is uridine(2552) in 23S rRNA + S-adenosyl-L-methionine = 2'-O-methyluridine(2552) in 23S rRNA + S-adenosyl-L-homocysteine + H(+). Functionally, specifically methylates the uridine in position 2552 of 23S rRNA at the 2'-O position of the ribose in the fully assembled 50S ribosomal subunit. This chain is Ribosomal RNA large subunit methyltransferase E, found in Methanocorpusculum labreanum (strain ATCC 43576 / DSM 4855 / Z).